A 265-amino-acid polypeptide reads, in one-letter code: MDFIHILALAILQGLTEFLPISSSAHLILLPVLAGWTDQGLAFDVAVHLGTLVAVISYFRLELARMARDWLQSLAAGQQQGESRLAWAVLLGTLPVGLVGIMLTETTQEALRSPLIIAWSTVGFGFLLAYADWAGKQQRNEHTLTWRDILFIGLAQALALIPGTSRSGITITAGLMLGLTREGAARFSFLLAIPVILLAGGLAALDLLNHTETVDWNALALGALISGLCAYACIHYFFKFLQRIGMLPFAVYRLLLGALLFYLFS.

8 consecutive transmembrane segments (helical) span residues 1-21 (MDFI…FLPI), 39-61 (QGLA…YFRL), 85-105 (LAWA…MLTE), 115-135 (LIIA…DWAG), 149-169 (ILFI…RSGI), 187-207 (FSFL…ALDL), 218-238 (ALAL…HYFF), and 244-264 (IGML…FYLF).

This sequence belongs to the UppP family.

It localises to the cell inner membrane. The enzyme catalyses di-trans,octa-cis-undecaprenyl diphosphate + H2O = di-trans,octa-cis-undecaprenyl phosphate + phosphate + H(+). Catalyzes the dephosphorylation of undecaprenyl diphosphate (UPP). Confers resistance to bacitracin. The chain is Undecaprenyl-diphosphatase from Nitrosococcus oceani (strain ATCC 19707 / BCRC 17464 / JCM 30415 / NCIMB 11848 / C-107).